A 63-amino-acid chain; its full sequence is Conotoxin Gm5.1 (63 aa).

The first 21 residues, 1–21 (MRYLPVFVILLLLIASIPSDT), serve as a signal peptide directing secretion. The propeptide occupies 22–50 (VQLKTKDDMPLASFHGNGRRILRMLSNKR).

It belongs to the conotoxin T superfamily. In terms of processing, contains 2 disulfide bonds that can be either 'C1-C3, C2-C4' or 'C1-C4, C2-C3', since these disulfide connectivities have been observed for conotoxins with cysteine framework V (for examples, see AC P0DQQ7 and AC P81755). As to expression, expressed by the venom duct.

The protein localises to the secreted. The polypeptide is Conotoxin Gm5.1 (Conus gloriamaris (Glory-of-the-Sea cone)).